The following is a 362-amino-acid chain: Chorismate synthase (362 aa).

Arginine 46 contacts NADP(+). FMN contacts are provided by residues 122–124, 238–239, glycine 278, 293–297, and arginine 319; these read RSS, NA, and KPTPS.

It belongs to the chorismate synthase family. In terms of assembly, homotetramer. FMNH2 serves as cofactor.

The enzyme catalyses 5-O-(1-carboxyvinyl)-3-phosphoshikimate = chorismate + phosphate. It functions in the pathway metabolic intermediate biosynthesis; chorismate biosynthesis; chorismate from D-erythrose 4-phosphate and phosphoenolpyruvate: step 7/7. Its function is as follows. Catalyzes the anti-1,4-elimination of the C-3 phosphate and the C-6 proR hydrogen from 5-enolpyruvylshikimate-3-phosphate (EPSP) to yield chorismate, which is the branch point compound that serves as the starting substrate for the three terminal pathways of aromatic amino acid biosynthesis. This reaction introduces a second double bond into the aromatic ring system. This is Chorismate synthase from Campylobacter jejuni subsp. doylei (strain ATCC BAA-1458 / RM4099 / 269.97).